The following is a 275-amino-acid chain: uncharacterized protein (275 aa).

The region spanning 1–162 is the ABC transmembrane type-1 domain; the sequence is NLFSVIVSLI…ITSYWTEVQR (162 aa). 3 helical membrane-spanning segments follow: residues 21-41, 106-126, and 137-157; these read LYLV…GNIM, IMNL…YYLM, and FAYV…TSYW.

It localises to the cell membrane. This is an uncharacterized protein from Staphylococcus epidermidis.